Reading from the N-terminus, the 256-residue chain is Alcohol dehydrogenase (256 aa).

12 to 35 serves as a coordination point for NAD(+); the sequence is FVAGLGGIGLDTSKELVKRDLKNL. Ser140 provides a ligand contact to substrate. The Proton acceptor role is filled by Tyr153.

This sequence belongs to the short-chain dehydrogenases/reductases (SDR) family. Homodimer.

The catalysed reaction is a primary alcohol + NAD(+) = an aldehyde + NADH + H(+). It carries out the reaction a secondary alcohol + NAD(+) = a ketone + NADH + H(+). This Drosophila erecta (Fruit fly) protein is Alcohol dehydrogenase (Adh).